The primary structure comprises 422 residues: Serine hydroxymethyltransferase (422 aa).

120-122 (GHI) provides a ligand contact to (6S)-5,6,7,8-tetrahydrofolate. Lys-226 is subject to N6-(pyridoxal phosphate)lysine. Glu-241 is a binding site for (6S)-5,6,7,8-tetrahydrofolate.

The protein belongs to the SHMT family. In terms of assembly, homodimer. Pyridoxal 5'-phosphate serves as cofactor.

The protein localises to the cytoplasm. It catalyses the reaction 5,10-methylenetetrahydromethanopterin + glycine + H2O = 5,6,7,8-tetrahydromethanopterin + L-serine. It participates in amino-acid biosynthesis; glycine biosynthesis; glycine from L-serine: step 1/1. In terms of biological role, catalyzes the reversible interconversion of serine and glycine with tetrahydromethanopterin (H4MPT) serving as the one-carbon carrier. Also exhibits a pteridine-independent aldolase activity toward beta-hydroxyamino acids, producing glycine and aldehydes, via a retro-aldol mechanism. The polypeptide is Serine hydroxymethyltransferase (Methanosphaera stadtmanae (strain ATCC 43021 / DSM 3091 / JCM 11832 / MCB-3)).